Here is a 93-residue protein sequence, read N- to C-terminus: Small ribosomal subunit protein uS19 (93 aa).

This sequence belongs to the universal ribosomal protein uS19 family.

In terms of biological role, protein S19 forms a complex with S13 that binds strongly to the 16S ribosomal RNA. The polypeptide is Small ribosomal subunit protein uS19 (Oenococcus oeni (strain ATCC BAA-331 / PSU-1)).